The chain runs to 374 residues: uncharacterized protein (374 aa).

A divalent metal cation contacts are provided by Asp-158, His-160, Asp-190, Asn-221, His-312, and His-314.

Belongs to the metallophosphoesterase superfamily. The cofactor is a divalent metal cation.

This is an uncharacterized protein from Campylobacter jejuni subsp. jejuni serotype O:2 (strain ATCC 700819 / NCTC 11168).